A 276-amino-acid chain; its full sequence is Large ribosomal subunit protein uL2 (276 aa).

The disordered stretch occupies residues 219 to 276 (TVRGSAMNPNDHPHGGGEGRSPIGRPSPVTPWGKPALGYKTRKKNKHSDKFIVTGRKR).

This sequence belongs to the universal ribosomal protein uL2 family. In terms of assembly, part of the 50S ribosomal subunit. Forms a bridge to the 30S subunit in the 70S ribosome.

One of the primary rRNA binding proteins. Required for association of the 30S and 50S subunits to form the 70S ribosome, for tRNA binding and peptide bond formation. It has been suggested to have peptidyltransferase activity; this is somewhat controversial. Makes several contacts with the 16S rRNA in the 70S ribosome. The chain is Large ribosomal subunit protein uL2 from Alkaliphilus metalliredigens (strain QYMF).